The primary structure comprises 306 residues: Dermonecrotic toxin LiSicTox-alphaIA2ai (306 aa).

The N-terminal stretch at Met-1–Ala-18 is a signal peptide. Residues Ala-19–Arg-26 constitute a propeptide that is removed on maturation. His-38 is a catalytic residue. Residues Glu-58 and Asp-60 each coordinate Mg(2+). Residue His-74 is the Nucleophile of the active site. Disulfide bonds link Cys-78-Cys-84 and Cys-80-Cys-223. Asp-118 is a binding site for Mg(2+). Residue Asn-283 is glycosylated (N-linked (GlcNAc...) asparagine).

This sequence belongs to the arthropod phospholipase D family. Class II subfamily. Class IIa sub-subfamily. Mg(2+) serves as cofactor. As to expression, expressed by the venom gland.

It is found in the secreted. It catalyses the reaction an N-(acyl)-sphingosylphosphocholine = an N-(acyl)-sphingosyl-1,3-cyclic phosphate + choline. The catalysed reaction is an N-(acyl)-sphingosylphosphoethanolamine = an N-(acyl)-sphingosyl-1,3-cyclic phosphate + ethanolamine. The enzyme catalyses a 1-acyl-sn-glycero-3-phosphocholine = a 1-acyl-sn-glycero-2,3-cyclic phosphate + choline. It carries out the reaction a 1-acyl-sn-glycero-3-phosphoethanolamine = a 1-acyl-sn-glycero-2,3-cyclic phosphate + ethanolamine. Dermonecrotic toxins cleave the phosphodiester linkage between the phosphate and headgroup of certain phospholipids (sphingolipid and lysolipid substrates), forming an alcohol (often choline) and a cyclic phosphate. This toxin acts on sphingomyelin (SM). It may also act on ceramide phosphoethanolamine (CPE), lysophosphatidylcholine (LPC) and lysophosphatidylethanolamine (LPE), but not on lysophosphatidylserine (LPS), and lysophosphatidylglycerol (LPG). It acts by transphosphatidylation, releasing exclusively cyclic phosphate products as second products. It induces complement-dependent hemolysis, dermonecrosis, vascular permeability and platelet aggregation. This Loxosceles intermedia (Brown spider) protein is Dermonecrotic toxin LiSicTox-alphaIA2ai.